The chain runs to 605 residues: Solute carrier family 23 member 1 (605 aa).

The segment at 1–30 (MKTPEDPGSPKQHEVVDSAGTSTRDRQAPL) is disordered. Topologically, residues 1 to 59 (MKTPEDPGSPKQHEVVDSAGTSTRDRQAPLPTEPKFDMLYKIEDVPPWYLCILLGFQHY) are cytoplasmic. A helical membrane pass occupies residues 60–80 (LTCFSGTIAVPFLLAEALCVG). The Extracellular segment spans residues 81–88 (RDQHMVSQ). The helical transmembrane segment at 89-109 (LIGTIFTCVGITTLIQTTVGI) threads the bilayer. Residue R110 is a topological domain, cytoplasmic. Residues 111-131 (LPLFQASAFAFLVPAKSILAL) form a helical membrane-spanning segment. Residues 132–166 (ERWKCPSEEEIYGNWSMPLNTSHIWHPRIREVQGA) are Extracellular-facing. N-linked (GlcNAc...) asparagine glycosylation is found at N145 and N151. Residues 167–187 (IMVSSMVEVVIGLMGLPGALL) form a helical membrane-spanning segment. The Cytoplasmic portion of the chain corresponds to 188 to 214 (SYIGPLTVTPTVSLIGLSVFQAAGDRA). Residues 215–232 (GSHWGISACSILLIVLFS) form a helical membrane-spanning segment. The Extracellular segment spans residues 233 to 236 (QYLR). An intramembrane region (helical) is located at residues 237 to 250 (NLTFLLPVYRWGKG). Topologically, residues 251–257 (LTLFRVQ) are extracellular. The chain crosses the membrane as a helical span at residues 258-278 (IFKMFPIVLAIMTVWLLCYVL). Topologically, residues 279–319 (TLTDVLPADPTVYGFQARTDARGDIMAISPWIRIPYPCQWG) are cytoplasmic. The helical transmembrane segment at 320–340 (LPTVTVAAVLGMFSATLAGII) threads the bilayer. Over 341–365 (ESIGDYYACARLAGAPPPPVHAINR) the chain is Extracellular. Residues 366 to 386 (GIFTEGICCIIAGLLGTGNGS) form a helical membrane-spanning segment. Residues 387–409 (TSSSPNIGVLGITKVGSRRVVQY) lie on the Cytoplasmic side of the membrane. Residues 410–430 (GAGIMLILGAIGKFTALFASL) form a helical membrane-spanning segment. Topologically, residues 431–433 (PDP) are extracellular. The chain crosses the membrane as a helical span at residues 434 to 454 (ILGGMFCTLFGMITAVGLSNL). The Cytoplasmic segment spans residues 455–464 (QFVDMNSSRN). A helical membrane pass occupies residues 465–485 (LFVLGFSMFFGLTLPNYLDSN). At 486–497 (PGAINTGIPEVD) the chain is on the extracellular side. Residues 498–518 (QILTVLLTTEMFVGGCLAFIL) traverse the membrane as a helical segment. Residues 519–605 (DNTVPGSPEE…IETGSVCTKV (87 aa)) are Cytoplasmic-facing. Residue T598 is modified to Phosphothreonine. The residue at position 600 (S600) is a Phosphoserine. Phosphothreonine is present on T603.

This sequence belongs to the nucleobase:cation symporter-2 (NCS2) (TC 2.A.40) family. Post-translationally, phosphorylated. As to expression, expressed in kidney (at protein level).

Its subcellular location is the cell membrane. It catalyses the reaction L-ascorbate(out) + 2 Na(+)(out) = L-ascorbate(in) + 2 Na(+)(in). It carries out the reaction urate(out) + 2 Na(+)(out) = urate(in) + 2 Na(+)(in). In terms of biological role, sodium:L-ascorbate cotransporter. Mediates electrogenic uptake of vitamin C, with a stoichiometry of 2 Na(+) for each L-ascorbate. Has retained some ancestral activity toward nucleobases such as urate, an oxidized purine. Low-affinity high-capacity sodium:urate cotransporter, may regulate serum urate levels by serving as a renal urate re-absorber. This chain is Solute carrier family 23 member 1 (Slc23a1), found in Mus musculus (Mouse).